A 129-amino-acid chain; its full sequence is Large ribosomal subunit protein bL12 (129 aa).

This sequence belongs to the bacterial ribosomal protein bL12 family. In terms of assembly, homodimer. Part of the ribosomal stalk of the 50S ribosomal subunit. Forms a multimeric L10(L12)X complex, where L10 forms an elongated spine to which 2 to 4 L12 dimers bind in a sequential fashion. Binds GTP-bound translation factors.

Forms part of the ribosomal stalk which helps the ribosome interact with GTP-bound translation factors. Is thus essential for accurate translation. This chain is Large ribosomal subunit protein bL12, found in Treponema pallidum (strain Nichols).